We begin with the raw amino-acid sequence, 47 residues long: Large ribosomal subunit protein bL27c (47 aa).

The segment at 1–21 (STKNGRDSNAQRLGVKKYGGE) is disordered.

This sequence belongs to the bacterial ribosomal protein bL27 family.

The protein localises to the plastid. The protein resides in the chloroplast. The polypeptide is Large ribosomal subunit protein bL27c (rpl27) (Porphyridium purpureum (Red alga)).